The primary structure comprises 454 residues: Bifunctional protein GlmU (454 aa).

The pyrophosphorylase stretch occupies residues 1–226 (MSLEIVILAA…AMEVQGVNDR (226 aa)). UDP-N-acetyl-alpha-D-glucosamine-binding positions include 8–11 (LAAG), Lys-22, Gln-73, 78–79 (GT), 99–101 (YGD), Gly-136, Glu-151, Asn-166, and Asn-224. Asp-101 contributes to the Mg(2+) binding site. Position 224 (Asn-224) interacts with Mg(2+). Residues 227–247 (MQQAQLERHYQRLRAEELMRQ) form a linker region. An N-acetyltransferase region spans residues 248 to 454 (GVTLLDPQRL…NWKRPEKIKK (207 aa)). UDP-N-acetyl-alpha-D-glucosamine contacts are provided by Arg-330 and Lys-348. His-360 serves as the catalytic Proton acceptor. The UDP-N-acetyl-alpha-D-glucosamine site is built by Tyr-363 and Asn-374. Acetyl-CoA-binding positions include Ala-377, 383 to 384 (NY), Ser-402, Ala-420, and Arg-437.

It in the N-terminal section; belongs to the N-acetylglucosamine-1-phosphate uridyltransferase family. The protein in the C-terminal section; belongs to the transferase hexapeptide repeat family. Homotrimer. It depends on Mg(2+) as a cofactor.

The protein localises to the cytoplasm. The enzyme catalyses alpha-D-glucosamine 1-phosphate + acetyl-CoA = N-acetyl-alpha-D-glucosamine 1-phosphate + CoA + H(+). It catalyses the reaction N-acetyl-alpha-D-glucosamine 1-phosphate + UTP + H(+) = UDP-N-acetyl-alpha-D-glucosamine + diphosphate. The protein operates within nucleotide-sugar biosynthesis; UDP-N-acetyl-alpha-D-glucosamine biosynthesis; N-acetyl-alpha-D-glucosamine 1-phosphate from alpha-D-glucosamine 6-phosphate (route II): step 2/2. It functions in the pathway nucleotide-sugar biosynthesis; UDP-N-acetyl-alpha-D-glucosamine biosynthesis; UDP-N-acetyl-alpha-D-glucosamine from N-acetyl-alpha-D-glucosamine 1-phosphate: step 1/1. Its pathway is bacterial outer membrane biogenesis; LPS lipid A biosynthesis. Functionally, catalyzes the last two sequential reactions in the de novo biosynthetic pathway for UDP-N-acetylglucosamine (UDP-GlcNAc). The C-terminal domain catalyzes the transfer of acetyl group from acetyl coenzyme A to glucosamine-1-phosphate (GlcN-1-P) to produce N-acetylglucosamine-1-phosphate (GlcNAc-1-P), which is converted into UDP-GlcNAc by the transfer of uridine 5-monophosphate (from uridine 5-triphosphate), a reaction catalyzed by the N-terminal domain. This Pseudomonas aeruginosa (strain LESB58) protein is Bifunctional protein GlmU.